The primary structure comprises 120 residues: Large ribosomal subunit protein uL18 (120 aa).

It belongs to the universal ribosomal protein uL18 family. As to quaternary structure, part of the 50S ribosomal subunit; part of the 5S rRNA/L5/L18/L25 subcomplex. Contacts the 5S and 23S rRNAs.

In terms of biological role, this is one of the proteins that bind and probably mediate the attachment of the 5S RNA into the large ribosomal subunit, where it forms part of the central protuberance. In Xanthobacter autotrophicus (strain ATCC BAA-1158 / Py2), this protein is Large ribosomal subunit protein uL18.